Here is a 344-residue protein sequence, read N- to C-terminus: UDP-3-O-acylglucosamine N-acyltransferase (344 aa).

The active-site Proton acceptor is the H248.

It belongs to the transferase hexapeptide repeat family. LpxD subfamily. As to quaternary structure, homotrimer.

It carries out the reaction a UDP-3-O-[(3R)-3-hydroxyacyl]-alpha-D-glucosamine + a (3R)-hydroxyacyl-[ACP] = a UDP-2-N,3-O-bis[(3R)-3-hydroxyacyl]-alpha-D-glucosamine + holo-[ACP] + H(+). Its pathway is bacterial outer membrane biogenesis; LPS lipid A biosynthesis. Catalyzes the N-acylation of UDP-3-O-acylglucosamine using 3-hydroxyacyl-ACP as the acyl donor. Is involved in the biosynthesis of lipid A, a phosphorylated glycolipid that anchors the lipopolysaccharide to the outer membrane of the cell. The polypeptide is UDP-3-O-acylglucosamine N-acyltransferase (Prochlorococcus marinus subsp. pastoris (strain CCMP1986 / NIES-2087 / MED4)).